A 225-amino-acid polypeptide reads, in one-letter code: UPF0758 protein AZOSEA04420 (225 aa).

Residues 102 to 225 (VFESPLAVRN…PLSFAERGLL (124 aa)) enclose the MPN domain. Residues histidine 173, histidine 175, and aspartate 186 each coordinate Zn(2+). A JAMM motif motif is present at residues 173–186 (HNHPSGAAEPSPAD).

The protein belongs to the UPF0758 family.

This is UPF0758 protein AZOSEA04420 from Aromatoleum aromaticum (strain DSM 19018 / LMG 30748 / EbN1) (Azoarcus sp. (strain EbN1)).